Here is a 409-residue protein sequence, read N- to C-terminus: Elongation factor Tu, chloroplastic (409 aa).

The tr-type G domain maps to 10–214; sequence KPHVNIGTIG…AVDTYIPTPE (205 aa). The interval 19–26 is G1; sequence GHVDHGKT. 19-26 lines the GTP pocket; sequence GHVDHGKT. Thr-26 is a binding site for Mg(2+). The G2 stretch occupies residues 60 to 64; it reads GITIN. Residues 81–84 are G3; it reads DCPG. Residues 81-85 and 136-139 each bind GTP; these read DCPGH and NKED. A G4 region spans residues 136 to 139; sequence NKED. A G5 region spans residues 174–176; it reads SAL.

Belongs to the TRAFAC class translation factor GTPase superfamily. Classic translation factor GTPase family. EF-Tu/EF-1A subfamily.

It is found in the plastid. Its subcellular location is the chloroplast. The enzyme catalyses GTP + H2O = GDP + phosphate + H(+). GTP hydrolase that promotes the GTP-dependent binding of aminoacyl-tRNA to the A-site of ribosomes during protein biosynthesis. This Porphyra purpurea (Red seaweed) protein is Elongation factor Tu, chloroplastic (tufA).